The primary structure comprises 252 residues: Probable transcriptional regulatory protein all4276 (252 aa).

It belongs to the TACO1 family.

It is found in the cytoplasm. In Nostoc sp. (strain PCC 7120 / SAG 25.82 / UTEX 2576), this protein is Probable transcriptional regulatory protein all4276.